Reading from the N-terminus, the 316-residue chain is 4-hydroxy-3-methylbut-2-enyl diphosphate reductase (316 aa).

Cys-12 serves as a coordination point for [4Fe-4S] cluster. (2E)-4-hydroxy-3-methylbut-2-enyl diphosphate-binding residues include His-41 and His-74. Dimethylallyl diphosphate-binding residues include His-41 and His-74. His-41 and His-74 together coordinate isopentenyl diphosphate. Cys-96 is a binding site for [4Fe-4S] cluster. His-124 contacts (2E)-4-hydroxy-3-methylbut-2-enyl diphosphate. Residue His-124 participates in dimethylallyl diphosphate binding. Position 124 (His-124) interacts with isopentenyl diphosphate. The Proton donor role is filled by Glu-126. Thr-167 lines the (2E)-4-hydroxy-3-methylbut-2-enyl diphosphate pocket. A [4Fe-4S] cluster-binding site is contributed by Cys-197. Ser-225, Ser-226, Asn-227, and Ser-269 together coordinate (2E)-4-hydroxy-3-methylbut-2-enyl diphosphate. Residues Ser-225, Ser-226, Asn-227, and Ser-269 each coordinate dimethylallyl diphosphate. Residues Ser-225, Ser-226, Asn-227, and Ser-269 each contribute to the isopentenyl diphosphate site.

It belongs to the IspH family. As to quaternary structure, homodimer. It depends on [4Fe-4S] cluster as a cofactor.

The enzyme catalyses isopentenyl diphosphate + 2 oxidized [2Fe-2S]-[ferredoxin] + H2O = (2E)-4-hydroxy-3-methylbut-2-enyl diphosphate + 2 reduced [2Fe-2S]-[ferredoxin] + 2 H(+). It carries out the reaction dimethylallyl diphosphate + 2 oxidized [2Fe-2S]-[ferredoxin] + H2O = (2E)-4-hydroxy-3-methylbut-2-enyl diphosphate + 2 reduced [2Fe-2S]-[ferredoxin] + 2 H(+). It participates in isoprenoid biosynthesis; dimethylallyl diphosphate biosynthesis; dimethylallyl diphosphate from (2E)-4-hydroxy-3-methylbutenyl diphosphate: step 1/1. It functions in the pathway isoprenoid biosynthesis; isopentenyl diphosphate biosynthesis via DXP pathway; isopentenyl diphosphate from 1-deoxy-D-xylulose 5-phosphate: step 6/6. In terms of biological role, catalyzes the conversion of 1-hydroxy-2-methyl-2-(E)-butenyl 4-diphosphate (HMBPP) into a mixture of isopentenyl diphosphate (IPP) and dimethylallyl diphosphate (DMAPP). Acts in the terminal step of the DOXP/MEP pathway for isoprenoid precursor biosynthesis. The protein is 4-hydroxy-3-methylbut-2-enyl diphosphate reductase of Salmonella paratyphi B (strain ATCC BAA-1250 / SPB7).